Reading from the N-terminus, the 142-residue chain is Putative pre-16S rRNA nuclease (142 aa).

The protein belongs to the YqgF nuclease family.

Its subcellular location is the cytoplasm. In terms of biological role, could be a nuclease involved in processing of the 5'-end of pre-16S rRNA. The polypeptide is Putative pre-16S rRNA nuclease (Blochmanniella floridana).